Here is a 33-residue protein sequence, read N- to C-terminus: uncharacterized protein (33 aa).

It to E.coli ylcH.

This is an uncharacterized protein from Enterobacteria phage 82 (Bacteriophage 82).